The chain runs to 151 residues: HTH-type transcriptional regulator TcaR (151 aa).

Residues 1–142 (MVKHLQDHIQ…VRQVLEVINH (142 aa)) enclose the HTH marR-type domain. Positions 54–77 (ISEITQRQGVNKAAVSRRIKKLID) form a DNA-binding region, H-T-H motif.

In terms of biological role, involved in the antibiotic teicoplanin susceptibility. Inactivation of the tcaRAB operon leads to teicoplanin resistance. Functionally, is a weak negative regulator of transcription of the icaABD operon. The chain is HTH-type transcriptional regulator TcaR (tcaR) from Staphylococcus aureus (strain COL).